The chain runs to 344 residues: L-rhamnose-proton symporter (344 aa).

The next 10 membrane-spanning stretches (helical) occupy residues 4–24, 38–58, 68–88, 101–121, 131–151, 175–195, 214–234, 259–279, 290–310, and 323–343; these read AITMGIFWHLIGAASAACFYA, WSVGGIVSWLILPWAISATLL, FSASTLLPVFLFGAMWGIGNI, MGIGIAIGITLIVGTLMTPII, TQGGQMTLLGVLVAVIGVGIV, LLLAVMCGIFSAGMSFAMNAA, LPSYVVIMGGGALVNLGFCFI, LLLSALGGLMWYLQFFFYAWG, MSWMLHMSFYVLCGGVVGLVL, and VLSLGCVVIIIAANIVGLGMA.

It belongs to the L-rhamnose transporter (TC 2.A.7.6) family.

The protein localises to the cell inner membrane. The catalysed reaction is L-rhamnopyranose(in) + H(+)(in) = L-rhamnopyranose(out) + H(+)(out). Uptake of L-rhamnose across the cytoplasmic membrane with the concomitant transport of protons into the cell (symport system). The protein is L-rhamnose-proton symporter of Klebsiella pneumoniae subsp. pneumoniae (strain ATCC 700721 / MGH 78578).